A 514-amino-acid polypeptide reads, in one-letter code: 2,3-bisphosphoglycerate-independent phosphoglycerate mutase (514 aa).

Residues Asp14 and Ser64 each coordinate Mn(2+). Ser64 serves as the catalytic Phosphoserine intermediate. Residues His125, 155–156 (RD), Arg187, Arg193, 263–266 (RADR), and Lys336 each bind substrate. Mn(2+) is bound by residues Asp403, His407, Asp444, His445, and His463.

The protein belongs to the BPG-independent phosphoglycerate mutase family. Monomer. Mn(2+) is required as a cofactor.

It carries out the reaction (2R)-2-phosphoglycerate = (2R)-3-phosphoglycerate. The protein operates within carbohydrate degradation; glycolysis; pyruvate from D-glyceraldehyde 3-phosphate: step 3/5. In terms of biological role, catalyzes the interconversion of 2-phosphoglycerate and 3-phosphoglycerate. This is 2,3-bisphosphoglycerate-independent phosphoglycerate mutase from Shewanella oneidensis (strain ATCC 700550 / JCM 31522 / CIP 106686 / LMG 19005 / NCIMB 14063 / MR-1).